The primary structure comprises 2293 residues: Protein Ycf2 B (2293 aa).

Position 1647–1654 (1647–1654 (GSIGTGRS)) interacts with ATP.

The protein belongs to the Ycf2 family.

The protein localises to the plastid. It is found in the chloroplast stroma. Probable ATPase of unknown function. Its presence in a non-photosynthetic plant (Epifagus virginiana) and experiments in tobacco indicate that it has an essential function which is probably not related to photosynthesis. The polypeptide is Protein Ycf2 B (Crucihimalaya wallichii (Rock-cress)).